We begin with the raw amino-acid sequence, 275 residues long: Echotoxin-2 (275 aa).

A signal peptide spans 1–23 (MKRNILALVVVVALISQSRPAES). Residues 23-32 (SAGGTIIATL) form a plays an important role in the hemolytic activity region. The tract at residues 49-67 (ETGASVASAAAAATSSDYS) is N-terminal region. Phosphocholine is bound by residues Gly123, Ser141, Pro143, Tyr176, and Tyr177. Positions 141 to 156 (SAPYNFDFYSNWLAVG) are trp-rich region, which is important for the binding to lipid membrane. A propeptide spanning residues 249–275 (RAIQQELARRAEEEKQRKRKALDEMLK) is cleaved from the precursor.

This sequence belongs to the actinoporin family. Sea anemone subfamily. Octamer or nonamer in membranes. Monomer in the soluble state. Salivary gland.

The protein resides in the secreted. Its subcellular location is the nematocyst. It is found in the target cell membrane. In terms of biological role, pore-forming protein that forms cations-selective hydrophilic pores of around 1 nm and causes cardiac stimulation and cytolysis. Pore formation is a multi-step process that involves specific recognition of membrane sphingomyelin (but neither cholesterol nor phosphatidylcholine) using aromatic rich region and adjacent phosphocholine (POC) binding site, firm binding to the membrane (mainly driven by hydrophobic interactions) accompanied by the transfer of the N-terminal region to the lipid-water interface and finally pore formation after oligomerization of monomers. Exhibits both hemolytic and lethal activities. Gangliosides potently inhibits the hemolytic activity. This chain is Echotoxin-2, found in Monoplex parthenopeus (Giant triton).